Reading from the N-terminus, the 602-residue chain is Elongation factor 4 (602 aa).

The tr-type G domain occupies 7-189; it reads KFIRNFSIIA…QLVVAIPPPV (183 aa). Residues 19 to 24 and 136 to 139 each bind GTP; these read DHGKST and NKID.

The protein belongs to the TRAFAC class translation factor GTPase superfamily. Classic translation factor GTPase family. LepA subfamily.

Its subcellular location is the cell inner membrane. The enzyme catalyses GTP + H2O = GDP + phosphate + H(+). Its function is as follows. Required for accurate and efficient protein synthesis under certain stress conditions. May act as a fidelity factor of the translation reaction, by catalyzing a one-codon backward translocation of tRNAs on improperly translocated ribosomes. Back-translocation proceeds from a post-translocation (POST) complex to a pre-translocation (PRE) complex, thus giving elongation factor G a second chance to translocate the tRNAs correctly. Binds to ribosomes in a GTP-dependent manner. The chain is Elongation factor 4 from Coxiella burnetii (strain RSA 493 / Nine Mile phase I).